Reading from the N-terminus, the 130-residue chain is Phosphoribosyl-AMP cyclohydrolase (130 aa).

Mg(2+) is bound at residue D78. C79 serves as a coordination point for Zn(2+). Positions 80 and 82 each coordinate Mg(2+). Residues C96 and C103 each contribute to the Zn(2+) site.

The protein belongs to the PRA-CH family. Homodimer. Mg(2+) serves as cofactor. Zn(2+) is required as a cofactor.

The protein localises to the cytoplasm. The catalysed reaction is 1-(5-phospho-beta-D-ribosyl)-5'-AMP + H2O = 1-(5-phospho-beta-D-ribosyl)-5-[(5-phospho-beta-D-ribosylamino)methylideneamino]imidazole-4-carboxamide. The protein operates within amino-acid biosynthesis; L-histidine biosynthesis; L-histidine from 5-phospho-alpha-D-ribose 1-diphosphate: step 3/9. Catalyzes the hydrolysis of the adenine ring of phosphoribosyl-AMP. The sequence is that of Phosphoribosyl-AMP cyclohydrolase from Nitrosospira multiformis (strain ATCC 25196 / NCIMB 11849 / C 71).